The primary structure comprises 359 residues: MRAYNFCAGPAALPTAVLEKAQQELLDWQGKGLSIMEMSHRSKDYVAVAEKAEADLRKLMNIPENYQVLFLQGGASLQFSAIPMNLLGKNSKADYIHTGIWSEKALKEAQRYGDINVIEAGTSIDGKLAIKNQSEWNLSQDAAYVHYAENETIGGIQFADIPDVNVPLVSDLSSSILSAPLDVSKFGLIYAGAQKNIGPAGLTIVIVRDDLLDQSRSDIPSILKYSAQAKNGSMVNTPATYAWYLSGLVFEWLLEQGGVDAIHQVNLEKAKLLYGYIDSSDFYNNPIAVPNRSIMNVPFTLADEALEKLFLQEAEENHLLNLAGHRSVGGMRASIYNAVPLEGVQALVNFMDTFVQKHG.

R41 serves as a coordination point for L-glutamate. Pyridoxal 5'-phosphate-binding positions include A75 to S76, W101, T152, D171, and Q194. The residue at position 195 (K195) is an N6-(pyridoxal phosphate)lysine. Residue N236 to T237 participates in pyridoxal 5'-phosphate binding.

Belongs to the class-V pyridoxal-phosphate-dependent aminotransferase family. SerC subfamily. As to quaternary structure, homodimer. The cofactor is pyridoxal 5'-phosphate.

The protein resides in the cytoplasm. It carries out the reaction O-phospho-L-serine + 2-oxoglutarate = 3-phosphooxypyruvate + L-glutamate. The catalysed reaction is 4-(phosphooxy)-L-threonine + 2-oxoglutarate = (R)-3-hydroxy-2-oxo-4-phosphooxybutanoate + L-glutamate. It participates in amino-acid biosynthesis; L-serine biosynthesis; L-serine from 3-phospho-D-glycerate: step 2/3. Its pathway is cofactor biosynthesis; pyridoxine 5'-phosphate biosynthesis; pyridoxine 5'-phosphate from D-erythrose 4-phosphate: step 3/5. Catalyzes the reversible conversion of 3-phosphohydroxypyruvate to phosphoserine and of 3-hydroxy-2-oxo-4-phosphonooxybutanoate to phosphohydroxythreonine. The chain is Phosphoserine aminotransferase from Acinetobacter baylyi (strain ATCC 33305 / BD413 / ADP1).